Reading from the N-terminus, the 483-residue chain is Glutamate--tRNA ligase (483 aa).

The short motif at 9–19 is the 'HIGH' region element; sequence PSPTGFLHIGN. The short motif at 253 to 257 is the 'KMSKS' region element; that stretch reads KLSKR. Lys256 serves as a coordination point for ATP.

Belongs to the class-I aminoacyl-tRNA synthetase family. Glutamate--tRNA ligase type 1 subfamily. In terms of assembly, monomer.

It localises to the cytoplasm. The catalysed reaction is tRNA(Glu) + L-glutamate + ATP = L-glutamyl-tRNA(Glu) + AMP + diphosphate. Catalyzes the attachment of glutamate to tRNA(Glu) in a two-step reaction: glutamate is first activated by ATP to form Glu-AMP and then transferred to the acceptor end of tRNA(Glu). This is Glutamate--tRNA ligase from Mycoplasma capricolum subsp. capricolum (strain California kid / ATCC 27343 / NCTC 10154).